A 634-amino-acid chain; its full sequence is Leucine--tRNA ligase subunit alpha (634 aa).

A 'HIGH' region motif is present at residues Pro43 to His51.

Belongs to the class-I aminoacyl-tRNA synthetase family. Seems to consist of an alpha chain and a beta chain.

It is found in the cytoplasm. It carries out the reaction tRNA(Leu) + L-leucine + ATP = L-leucyl-tRNA(Leu) + AMP + diphosphate. In Aquifex aeolicus (strain VF5), this protein is Leucine--tRNA ligase subunit alpha (leuS).